We begin with the raw amino-acid sequence, 106 residues long: Large ribosomal subunit protein uL24 (106 aa).

The protein belongs to the universal ribosomal protein uL24 family. Part of the 50S ribosomal subunit.

Its function is as follows. One of two assembly initiator proteins, it binds directly to the 5'-end of the 23S rRNA, where it nucleates assembly of the 50S subunit. In terms of biological role, one of the proteins that surrounds the polypeptide exit tunnel on the outside of the subunit. This is Large ribosomal subunit protein uL24 from Paracidovorax citrulli (strain AAC00-1) (Acidovorax citrulli).